The primary structure comprises 386 residues: Paralemmin-1 (386 aa).

Residues 4–115 (VEANTLQQER…TKENLAEAAA (112 aa)) are a coiled coil. Disordered stretches follow at residues 21-40 (RKRQ…DRRQ), 51-149 (ERWL…PMKA), 240-290 (EATA…TMIF), and 321-378 (DAES…AKKQ). Basic and acidic residues-rich tracts occupy residues 24-40 (QTEI…DRRQ) and 68-95 (AMKK…RELE). Over residues 97-116 (LENSSSVTSTKENLAEAAAP) the composition is skewed to low complexity. Composition is skewed to basic and acidic residues over residues 259-282 (PRRE…EPSR), 322-334 (AESK…KDHA), and 365-377 (EAKE…DAKK). S-palmitoyl cysteine attachment occurs at residues Cys-380 and Cys-382. The residue at position 383 (Cys-383) is a Cysteine methyl ester. Cys-383 carries the S-farnesyl cysteine lipid modification. Residues 384–386 (TVM) constitute a propeptide, removed in mature form.

This sequence belongs to the paralemmin family. Interacts with dopamine receptor DRD3. Post-translationally, phosphorylated. Expressed in the lens (at protein level). Highly expressed in forebrain and cerebellum with lower expression in adrenal gland and heart. Expression weak or undetectable in other tissues.

It localises to the cell membrane. Its subcellular location is the cell projection. It is found in the filopodium membrane. The protein resides in the axon. The protein localises to the dendrite. It localises to the dendritic spine. Its subcellular location is the basolateral cell membrane. It is found in the apicolateral cell membrane. Functionally, involved in plasma membrane dynamics and cell process formation. Isoform 1 and isoform 2 are necessary for axonal and dendritic filopodia induction, for dendritic spine maturation and synapse formation in a palmitoylation-dependent manner. In Gallus gallus (Chicken), this protein is Paralemmin-1 (PALM).